The chain runs to 323 residues: Aspartate carbamoyltransferase catalytic subunit (323 aa).

Carbamoyl phosphate contacts are provided by arginine 65 and threonine 66. Lysine 93 lines the L-aspartate pocket. Carbamoyl phosphate is bound by residues arginine 115, histidine 149, and glutamine 152. L-aspartate is bound by residues arginine 182 and arginine 237. 2 residues coordinate carbamoyl phosphate: glycine 278 and proline 279.

This sequence belongs to the aspartate/ornithine carbamoyltransferase superfamily. ATCase family. Heterododecamer (2C3:3R2) of six catalytic PyrB chains organized as two trimers (C3), and six regulatory PyrI chains organized as three dimers (R2).

The enzyme catalyses carbamoyl phosphate + L-aspartate = N-carbamoyl-L-aspartate + phosphate + H(+). It participates in pyrimidine metabolism; UMP biosynthesis via de novo pathway; (S)-dihydroorotate from bicarbonate: step 2/3. Its function is as follows. Catalyzes the condensation of carbamoyl phosphate and aspartate to form carbamoyl aspartate and inorganic phosphate, the committed step in the de novo pyrimidine nucleotide biosynthesis pathway. The sequence is that of Aspartate carbamoyltransferase catalytic subunit from Aromatoleum aromaticum (strain DSM 19018 / LMG 30748 / EbN1) (Azoarcus sp. (strain EbN1)).